The sequence spans 662 residues: Calcium-dependent protease (662 aa).

Positions Q196–V529 constitute a Peptidase S8 domain. Active-site charge relay system residues include D233, H270, and S466. The region spanning A535–F662 is the P/Homo B domain.

The protein belongs to the peptidase S8 family.

The protein resides in the cytoplasm. In terms of biological role, degrades phycobiliproteins in vitro. Has a substrate specificity similar to that of trypsin. The polypeptide is Calcium-dependent protease (prcA) (Nostoc sp. (strain PCC 7120 / SAG 25.82 / UTEX 2576)).